The sequence spans 205 residues: Microtubule-associated protein Jupiter (205 aa).

Ser30 carries the post-translational modification Phosphoserine. Residues Thr41, Thr98, and Thr102 each carry the phosphothreonine modification. Over residues 124 to 135 (LISNSKGNYNGK) the composition is skewed to polar residues. The interval 124-205 (LISNSKGNYN…PPGGYSSGLW (82 aa)) is disordered. Over residues 136–149 (SGSVSSASSSVSSS) the composition is skewed to low complexity. Phosphoserine is present on residues Ser138 and Ser149. Residues 181–191 (PANNGSSQVIN) show a composition bias toward polar residues.

Belongs to the MAP Jupiter family.

The protein resides in the nucleus. The protein localises to the cytoplasm. Its subcellular location is the cytoskeleton. It is found in the spindle. In terms of biological role, binds to all microtubule populations. The sequence is that of Microtubule-associated protein Jupiter from Drosophila virilis (Fruit fly).